The primary structure comprises 441 residues: Ribulose bisphosphate carboxylase large chain (441 aa).

At lysine 5 the chain carries N6,N6,N6-trimethyllysine. Substrate is bound by residues asparagine 114 and threonine 164. Catalysis depends on lysine 166, which acts as the Proton acceptor. Residue lysine 168 coordinates substrate. Residues lysine 192, aspartate 194, and glutamate 195 each coordinate Mg(2+). Position 192 is an N6-carboxylysine (lysine 192). The active-site Proton acceptor is the histidine 285. Substrate-binding residues include arginine 286, histidine 318, and serine 370.

This sequence belongs to the RuBisCO large chain family. Type I subfamily. Heterohexadecamer of 8 large chains and 8 small chains; disulfide-linked. The disulfide link is formed within the large subunit homodimers. The cofactor is Mg(2+). In terms of processing, the disulfide bond which can form in the large chain dimeric partners within the hexadecamer appears to be associated with oxidative stress and protein turnover.

The protein localises to the plastid. It localises to the chloroplast. It carries out the reaction 2 (2R)-3-phosphoglycerate + 2 H(+) = D-ribulose 1,5-bisphosphate + CO2 + H2O. It catalyses the reaction D-ribulose 1,5-bisphosphate + O2 = 2-phosphoglycolate + (2R)-3-phosphoglycerate + 2 H(+). In terms of biological role, ruBisCO catalyzes two reactions: the carboxylation of D-ribulose 1,5-bisphosphate, the primary event in carbon dioxide fixation, as well as the oxidative fragmentation of the pentose substrate in the photorespiration process. Both reactions occur simultaneously and in competition at the same active site. The sequence is that of Ribulose bisphosphate carboxylase large chain from Drosera petiolaris (Woolly sundew).